A 334-amino-acid chain; its full sequence is N-acetyl-gamma-glutamyl-phosphate reductase (334 aa).

Cys-154 is an active-site residue.

It belongs to the NAGSA dehydrogenase family. Type 1 subfamily.

The protein resides in the cytoplasm. It catalyses the reaction N-acetyl-L-glutamate 5-semialdehyde + phosphate + NADP(+) = N-acetyl-L-glutamyl 5-phosphate + NADPH + H(+). It functions in the pathway amino-acid biosynthesis; L-arginine biosynthesis; N(2)-acetyl-L-ornithine from L-glutamate: step 3/4. In terms of biological role, catalyzes the NADPH-dependent reduction of N-acetyl-5-glutamyl phosphate to yield N-acetyl-L-glutamate 5-semialdehyde. The chain is N-acetyl-gamma-glutamyl-phosphate reductase from Salmonella typhi.